The primary structure comprises 201 residues: Probable quinol oxidase subunit 3 (201 aa).

5 helical membrane-spanning segments follow: residues 20-40 (LGFWIFITAEFALFGTLFATL), 62-82 (LVLIMTFALLFSSYTCGIAIY), 91-111 (LMMFWMIITLLLGLVFVGFEI), 133-153 (FFILLGTHGCHVSLGIVWAIC), and 172-192 (FIVSLYWHFLDVVWVFIFTAV).

This sequence belongs to the cytochrome c oxidase subunit 3 family.

Its subcellular location is the cell membrane. The catalysed reaction is 2 a quinol + O2 = 2 a quinone + 2 H2O. Functionally, catalyzes quinol oxidation with the concomitant reduction of oxygen to water. The sequence is that of Probable quinol oxidase subunit 3 (qoxC) from Staphylococcus aureus (strain MSSA476).